Reading from the N-terminus, the 199-residue chain is Nucleoside triphosphate pyrophosphatase (199 aa).

Residue Asp-76 is the Proton acceptor of the active site.

Belongs to the Maf family. A divalent metal cation serves as cofactor.

Its subcellular location is the cytoplasm. The enzyme catalyses a ribonucleoside 5'-triphosphate + H2O = a ribonucleoside 5'-phosphate + diphosphate + H(+). It catalyses the reaction a 2'-deoxyribonucleoside 5'-triphosphate + H2O = a 2'-deoxyribonucleoside 5'-phosphate + diphosphate + H(+). Functionally, nucleoside triphosphate pyrophosphatase. May have a dual role in cell division arrest and in preventing the incorporation of modified nucleotides into cellular nucleic acids. The chain is Nucleoside triphosphate pyrophosphatase from Caulobacter vibrioides (strain ATCC 19089 / CIP 103742 / CB 15) (Caulobacter crescentus).